The chain runs to 334 residues: Heat-inducible transcription repressor HrcA (334 aa).

This sequence belongs to the HrcA family.

Its function is as follows. Negative regulator of class I heat shock genes (grpE-dnaK-dnaJ and groELS operons). Prevents heat-shock induction of these operons. This is Heat-inducible transcription repressor HrcA from Paracidovorax citrulli (strain AAC00-1) (Acidovorax citrulli).